Reading from the N-terminus, the 548-residue chain is ATP synthase subunit alpha (548 aa).

Residue glycine 172–threonine 179 participates in ATP binding. The disordered stretch occupies residues phenylalanine 511–lysine 548. Over residues glutamate 523–glutamate 534 the composition is skewed to acidic residues.

Belongs to the ATPase alpha/beta chains family. F-type ATPases have 2 components, CF(1) - the catalytic core - and CF(0) - the membrane proton channel. CF(1) has five subunits: alpha(3), beta(3), gamma(1), delta(1), epsilon(1). CF(0) has three main subunits: a(1), b(2) and c(9-12). The alpha and beta chains form an alternating ring which encloses part of the gamma chain. CF(1) is attached to CF(0) by a central stalk formed by the gamma and epsilon chains, while a peripheral stalk is formed by the delta and b chains.

It is found in the cell membrane. The enzyme catalyses ATP + H2O + 4 H(+)(in) = ADP + phosphate + 5 H(+)(out). Its function is as follows. Produces ATP from ADP in the presence of a proton gradient across the membrane. The alpha chain is a regulatory subunit. The sequence is that of ATP synthase subunit alpha from Mycobacterium sp. (strain JLS).